Reading from the N-terminus, the 877-residue chain is Telomere length regulation protein clk-2 (877 aa).

Over residues Asn-488 to Arg-501 the composition is skewed to polar residues. Residues Asn-488 to Asp-509 form a disordered region.

This sequence belongs to the TEL2 family.

Its subcellular location is the nucleus. The protein localises to the chromosome. The protein resides in the telomere. DNA damage checkpoint protein required for DNA damage-induced cell cycle arrest and apoptosis, thereby playing a role in genome stability. Regulator of telomere length. The sequence is that of Telomere length regulation protein clk-2 (clk-2) from Caenorhabditis elegans.